Consider the following 347-residue polypeptide: L-threonine 3-dehydrogenase (347 aa).

C42 lines the Zn(2+) pocket. Residues T44 and H47 each act as charge relay system in the active site. H67, E68, C97, C100, C103, and C111 together coordinate Zn(2+). NAD(+)-binding positions include I179, E199, R204, 266–268 (LGL), and 291–292 (IT).

This sequence belongs to the zinc-containing alcohol dehydrogenase family. As to quaternary structure, homotetramer. Zn(2+) is required as a cofactor.

The protein localises to the cytoplasm. It catalyses the reaction L-threonine + NAD(+) = (2S)-2-amino-3-oxobutanoate + NADH + H(+). It participates in amino-acid degradation; L-threonine degradation via oxydo-reductase pathway; glycine from L-threonine: step 1/2. Its function is as follows. Catalyzes the NAD(+)-dependent oxidation of L-threonine to 2-amino-3-ketobutyrate. The sequence is that of L-threonine 3-dehydrogenase from Caldanaerobacter subterraneus subsp. tengcongensis (strain DSM 15242 / JCM 11007 / NBRC 100824 / MB4) (Thermoanaerobacter tengcongensis).